Reading from the N-terminus, the 463-residue chain is Serine/threonine-protein kinase sgk-1 (463 aa).

Positions 135–392 constitute a Protein kinase domain; sequence FDYLTTIGKG…FRDIRDHPFF (258 aa). ATP-binding positions include 141 to 149 and K164; that span reads IGKGSFGRV. The active-site Proton acceptor is D259. In terms of domain architecture, AGC-kinase C-terminal spans 393-463; that stretch reads LPVDWDKLLN…TFVDTNRVLV (71 aa).

Belongs to the protein kinase superfamily. AGC Ser/Thr protein kinase family. As to quaternary structure, interacts with pdk-1, akt-1, akt-2 and daf-16. Part of a complex containing sgk-1, akt-1 and akt-2. Interacts with let-92 phosphatase regulatory subunit pptr-1. Requires Mg(2+) as cofactor. Expressed in late embryos just before hatching. At postembryonic stages, expressed in sensory and motor neurons and in the intestine. Highly expressed in the intestine and head and tail neurons.

It localises to the cytoplasm. The protein resides in the nucleus. It is found in the apical cell membrane. The enzyme catalyses L-seryl-[protein] + ATP = O-phospho-L-seryl-[protein] + ADP + H(+). It carries out the reaction L-threonyl-[protein] + ATP = O-phospho-L-threonyl-[protein] + ADP + H(+). Phosphorylated and activated by pdk-1. Its function is as follows. Acts downstream of PI3 kinase age-1 and kinase pdk-1 in the daf-2/insulin receptor-like transduction pathway. Essential role in regulating development, stress response, and longevity. Phosphorylates Forkhead-related daf-16 and the longevity-promoting skn-1 transcription factors, which inhibits their entry into the nucleus and antagonizes their function. Promotes the cytoplasmic localization of the transcription factor pqm-1. Plays a role in the intracellular trafficking of proteins such as mig-14 to the cell membrane, and this may be through positively regulating ceramide synthesis. Acts downstream of rict-1 to regulate fat storage, size, development and vitellogenesis. Downstream of age-1 and together with akt-1/2, promotes cell survival during embryonic development. Plays a role in maintaining the gonadal basement membrane through antagonizing akt-1 activity. Does not appear to play a role in immune function. The polypeptide is Serine/threonine-protein kinase sgk-1 (Caenorhabditis elegans).